Here is a 158-residue protein sequence, read N- to C-terminus: Transcription elongation factor GreA (158 aa).

This sequence belongs to the GreA/GreB family.

In terms of biological role, necessary for efficient RNA polymerase transcription elongation past template-encoded arresting sites. The arresting sites in DNA have the property of trapping a certain fraction of elongating RNA polymerases that pass through, resulting in locked ternary complexes. Cleavage of the nascent transcript by cleavage factors such as GreA or GreB allows the resumption of elongation from the new 3'terminus. GreA releases sequences of 2 to 3 nucleotides. This is Transcription elongation factor GreA from Ralstonia nicotianae (strain ATCC BAA-1114 / GMI1000) (Ralstonia solanacearum).